We begin with the raw amino-acid sequence, 409 residues long: Proteasome-activating nucleotidase (409 aa).

The interval 1–22 is disordered; the sequence is MTLSSAGGSRSHRHNGGHSERD. Residues 23 to 58 adopt a coiled-coil conformation; the sequence is VEIRILKDKVRSLTKEKISLQKELEYYKNEITKLLS. Residues 183-188 and His-322 each bind ATP; that span reads GTGKTL.

This sequence belongs to the AAA ATPase family. As to quaternary structure, homohexamer. The hexameric complex has a two-ring architecture resembling a top hat that caps the 20S proteasome core at one or both ends. Upon ATP-binding, the C-terminus of PAN interacts with the alpha-rings of the proteasome core by binding to the intersubunit pockets.

The protein localises to the cytoplasm. Its function is as follows. ATPase which is responsible for recognizing, binding, unfolding and translocation of substrate proteins into the archaeal 20S proteasome core particle. Is essential for opening the gate of the 20S proteasome via an interaction with its C-terminus, thereby allowing substrate entry and access to the site of proteolysis. Thus, the C-termini of the proteasomal ATPase function like a 'key in a lock' to induce gate opening and therefore regulate proteolysis. Unfolding activity requires energy from ATP hydrolysis, whereas ATP binding alone promotes ATPase-20S proteasome association which triggers gate opening, and supports translocation of unfolded substrates. This chain is Proteasome-activating nucleotidase, found in Aeropyrum pernix (strain ATCC 700893 / DSM 11879 / JCM 9820 / NBRC 100138 / K1).